Here is an 870-residue protein sequence, read N- to C-terminus: Phenylalanine--tRNA ligase beta subunit (870 aa).

The region spanning 39 to 148 (AADLQKFEVA…EDAVVGEPFT (110 aa)) is the tRNA-binding domain. The 125-residue stretch at 427-551 (PAKKTLDFPA…RIYGYDKIES (125 aa)) folds into the B5 domain. Residues 450–498 (LLHNEANKGEFVGNTEHSIAAYKEVREDASTGLTPKLPLEASYVKGLNI) enclose the RPE1 insert domain. 4 residues coordinate Mg(2+): Asp-529, Asp-535, Glu-538, and Glu-539. Positions 776-869 (SDYQANFRDY…IEQKFQGTLR (94 aa)) constitute an FDX-ACB domain.

This sequence belongs to the phenylalanyl-tRNA synthetase beta subunit family. Type 1 subfamily. Tetramer of two alpha and two beta subunits. It depends on Mg(2+) as a cofactor.

It localises to the cytoplasm. It catalyses the reaction tRNA(Phe) + L-phenylalanine + ATP = L-phenylalanyl-tRNA(Phe) + AMP + diphosphate + H(+). The sequence is that of Phenylalanine--tRNA ligase beta subunit (pheT) from Rickettsia bellii (strain RML369-C).